Here is a 459-residue protein sequence, read N- to C-terminus: tRNA modification GTPase MnmE (459 aa).

The (6S)-5-formyl-5,6,7,8-tetrahydrofolate site is built by R22, E85, and R124. In terms of domain architecture, TrmE-type G spans G221–F380. N231 contributes to the K(+) binding site. GTP contacts are provided by residues N231 to S236, T250 to T256, and D275 to G278. S235 lines the Mg(2+) pocket. K(+)-binding residues include T250, V252, and T255. Residue T256 participates in Mg(2+) binding. K459 is a (6S)-5-formyl-5,6,7,8-tetrahydrofolate binding site.

It belongs to the TRAFAC class TrmE-Era-EngA-EngB-Septin-like GTPase superfamily. TrmE GTPase family. Homodimer. Heterotetramer of two MnmE and two MnmG subunits. Requires K(+) as cofactor.

The protein localises to the cytoplasm. Exhibits a very high intrinsic GTPase hydrolysis rate. Involved in the addition of a carboxymethylaminomethyl (cmnm) group at the wobble position (U34) of certain tRNAs, forming tRNA-cmnm(5)s(2)U34. The protein is tRNA modification GTPase MnmE of Staphylococcus aureus (strain MW2).